Consider the following 465-residue polypeptide: Cysteine--tRNA ligase (465 aa).

Cys27 lines the Zn(2+) pocket. Positions 29-39 (PTVYNFFHIGN) match the 'HIGH' region motif. Residues Cys207, His232, and Glu236 each contribute to the Zn(2+) site. The 'KMSKS' region motif lies at 264–268 (KMSKS). Lys267 provides a ligand contact to ATP.

The protein belongs to the class-I aminoacyl-tRNA synthetase family. As to quaternary structure, monomer. Zn(2+) is required as a cofactor.

The protein resides in the cytoplasm. It carries out the reaction tRNA(Cys) + L-cysteine + ATP = L-cysteinyl-tRNA(Cys) + AMP + diphosphate. This Clostridium botulinum (strain 657 / Type Ba4) protein is Cysteine--tRNA ligase.